A 222-amino-acid chain; its full sequence is Peptide methionine sulfoxide reductase MsrA 1 (222 aa).

C57 is an active-site residue.

Belongs to the MsrA Met sulfoxide reductase family.

It carries out the reaction L-methionyl-[protein] + [thioredoxin]-disulfide + H2O = L-methionyl-(S)-S-oxide-[protein] + [thioredoxin]-dithiol. The enzyme catalyses [thioredoxin]-disulfide + L-methionine + H2O = L-methionine (S)-S-oxide + [thioredoxin]-dithiol. Functionally, has an important function as a repair enzyme for proteins that have been inactivated by oxidation. Catalyzes the reversible oxidation-reduction of methionine sulfoxide in proteins to methionine. The chain is Peptide methionine sulfoxide reductase MsrA 1 (msrA1) from Synechocystis sp. (strain ATCC 27184 / PCC 6803 / Kazusa).